The following is a 108-amino-acid chain: MGVEIETISPGDGRTFPKKGQTCVVHYTGMLQNGKKFDSSRDRNKPFKFRIGKQEVIKGFEEGAAQMSLGQRAKLTCTPDVAYGATGHPGVIPPNATLIFGVELLNLE.

The region spanning 20 to 108 (GQTCVVHYTG…IFGVELLNLE (89 aa)) is the PPIase FKBP-type domain.

Belongs to the FKBP-type PPIase family. FKBP1 subfamily. In terms of assembly, identified in a complex composed of RYR2, FKBP1B, PKA catalytic subunit, PRKAR2A, AKAP6, and the protein phosphatases PP2A and PP1. Interacts directly with RYR2.

It is found in the cytoplasm. The protein resides in the sarcoplasmic reticulum. The enzyme catalyses [protein]-peptidylproline (omega=180) = [protein]-peptidylproline (omega=0). Inhibited by both FK506 and rapamycin. In terms of biological role, has the potential to contribute to the immunosuppressive and toxic effects of FK506 and rapamycin. PPIases accelerate the folding of proteins. It catalyzes the cis-trans isomerization of proline imidic peptide bonds in oligopeptides. The polypeptide is Peptidyl-prolyl cis-trans isomerase FKBP1B (FKBP1B) (Oryctolagus cuniculus (Rabbit)).